Reading from the N-terminus, the 206-residue chain is Thymidylate kinase (206 aa).

11–18 lines the ATP pocket; it reads GIDGAGKT.

The protein belongs to the thymidylate kinase family.

It catalyses the reaction dTMP + ATP = dTDP + ADP. Functionally, phosphorylation of dTMP to form dTDP in both de novo and salvage pathways of dTTP synthesis. The chain is Thymidylate kinase from Paraburkholderia xenovorans (strain LB400).